We begin with the raw amino-acid sequence, 434 residues long: E3 ubiquitin-protein ligase siah-1 (434 aa).

Residues 27-88 (FEEDENAGPE…NGNTPSVTIP (62 aa)) are disordered. Residues 43 to 55 (SSSSASSQRSSAS) show a composition bias toward low complexity. The segment covering 74–88 (MSNNQNGNTPSVTIP) has biased composition (polar residues). The RING-type; degenerate zinc-finger motif lies at 171–206 (CPVCLEYMLPPYMQCPSGHLVCSNCRPKLQCCPTCR). Residues 220 to 415 (IANTVRFPCK…LGINVTISRI (196 aa)) form an SBD region. The SIAH-type; degenerate zinc finger occupies 223 to 283 (TVRFPCKFSN…VMDHLKKVHK (61 aa)). Positions 228, 235, 247, 251, 258, 265, 277, and 282 each coordinate Zn(2+).

It belongs to the SINA (Seven in absentia) family. In terms of assembly, interacts with tir-1.

The enzyme catalyses S-ubiquitinyl-[E2 ubiquitin-conjugating enzyme]-L-cysteine + [acceptor protein]-L-lysine = [E2 ubiquitin-conjugating enzyme]-L-cysteine + N(6)-ubiquitinyl-[acceptor protein]-L-lysine.. It functions in the pathway protein modification; protein ubiquitination. Functionally, E3 ubiquitin-protein ligase that mediates ubiquitination and subsequent proteasomal degradation of target proteins. E3 ubiquitin ligases accept ubiquitin from an E2 ubiquitin-conjugating enzyme in the form of a thioester and then directly transfers the ubiquitin to targeted substrates. It probably triggers the ubiquitin-mediated degradation of different substrates. In Caenorhabditis briggsae, this protein is E3 ubiquitin-protein ligase siah-1.